The sequence spans 105 residues: Ig lambda chain C region (105 aa).

The Ig-like domain maps to 6–100 (PSVILFPPSS…EGHTVEKSLA (95 aa)). A disulfide bridge connects residues C27 and C86.

This is Ig lambda chain C region from Oryctolagus cuniculus (Rabbit).